A 101-amino-acid chain; its full sequence is Putative pterin-4-alpha-carbinolamine dehydratase (101 aa).

Belongs to the pterin-4-alpha-carbinolamine dehydratase family.

The enzyme catalyses (4aS,6R)-4a-hydroxy-L-erythro-5,6,7,8-tetrahydrobiopterin = (6R)-L-erythro-6,7-dihydrobiopterin + H2O. The polypeptide is Putative pterin-4-alpha-carbinolamine dehydratase (Nitrobacter winogradskyi (strain ATCC 25391 / DSM 10237 / CIP 104748 / NCIMB 11846 / Nb-255)).